Reading from the N-terminus, the 127-residue chain is uncharacterized protein (127 aa).

In terms of domain architecture, VOC spans 1–127; the sequence is MKIVVTSIFV…CGNLIQIVQK (127 aa).

This sequence belongs to the glyoxalase I family.

This is an uncharacterized protein from Bacillus subtilis (strain 168).